Here is a 133-residue protein sequence, read N- to C-terminus: Endoribonuclease YbeY (133 aa).

The Zn(2+) site is built by H105, H109, and H115.

The protein belongs to the endoribonuclease YbeY family. Zn(2+) is required as a cofactor.

It is found in the cytoplasm. In terms of biological role, single strand-specific metallo-endoribonuclease involved in late-stage 70S ribosome quality control and in maturation of the 3' terminus of the 16S rRNA. In Lawsonia intracellularis (strain PHE/MN1-00), this protein is Endoribonuclease YbeY.